The following is an 877-amino-acid chain: MQDKYSPSEVEQQAQQHWQAQDAYRVTEHARAADGSDKPKFYACSMLPYPSGKLHMGHVRNYTINDVMMRQLRMKGYNVLMPMGWDAFGMPAENAALNNGVAPAAWTYDNIAYMKKQMQSMGLAIDWSREVATCSPDYYKWNQWLFLKMLEKGIAYRKTGTVNWDPIDQTVLANEQVIDGRGWRSGAVVEKREIPMYYLRITDYAQELLSDLDPLGWPERVKLMQQNWIGKSEGVRFAFPHGIPGDDGKVIGDGKLYVFTTRADTIMGVTFCAVAAEHPIAAHAAQGNPALAAFIDECKHGSVMEADMATMEKKGMPTGLTVTHPLTGEAVPVWVGNYVLMTYGDGAVMGVPAHDERDFAFANKYGLAIKQVIDVKGQPFGTEAWQEWYADKERGVLVHSGKYDGLDYRQAVDAVAADLAAQGLGEKKTTWRLRDWGISRQRYWGTPIPLIHCDSCGVVPVPEQDLPVRLPEDLVPDGSGNPLAKDARFLECTCPSCGKPARRETDTMDTFIDSCWYYMRYTCPDGATMVDGRNDYWMPMDQYIGGIEHAILHLLYARFWTKVMRDLGLVKFDEPFTKLLTQGMVLNETYYREDAAGKKQWINPADVDVQTDDRGRPIGATLKADGQPVVIGGVEKMSKSKNNGIDPQALIDQYGADTARLFTMFAAPPEQQLEWSDAGVEGASRFLRRAWNFGVAHAESIRAGHGNGVVNGATDADRALRRELHTVLKQANYDYERLQYNTVVSAAMKMLNALEGAKDAGADARREGLGILLRVLYPVVPHITHVLWQELGYAGAYGGLLDAPWPQVDEGALVQSEIELVLQVNGKVRGSIVVPADADRAAIEAIAAKDEAVHRFAEGKPPKKIIVVPGRLVNVVA.

The 'HIGH' region signature appears at 48–58; that stretch reads PYPSGKLHMGH. Residues 636–640 carry the 'KMSKS' region motif; the sequence is KMSKS. Position 639 (Lys639) interacts with ATP.

It belongs to the class-I aminoacyl-tRNA synthetase family.

The protein localises to the cytoplasm. The enzyme catalyses tRNA(Leu) + L-leucine + ATP = L-leucyl-tRNA(Leu) + AMP + diphosphate. The polypeptide is Leucine--tRNA ligase (Ralstonia nicotianae (strain ATCC BAA-1114 / GMI1000) (Ralstonia solanacearum)).